A 258-amino-acid polypeptide reads, in one-letter code: Peptidase inhibitor 15 (258 aa).

Residues 1–21 (MIMNSAVSLVILLSLLCEAHT) form the signal peptide. The propeptide occupies 22 to 60 (VVLLNPTDSSLPANNFTDTEAALSTPLESADIPKARRKR). N36 and N124 each carry an N-linked (GlcNAc...) asparagine glycan. One can recognise an SCP domain in the interval 71 to 211 (LDYHNQVRGK…RRAVYLVCNY (141 aa)).

The protein belongs to the CRISP family. Post-translationally, N-glycosylated. In terms of tissue distribution, weakly expressed. Expressed at low level in prostate, mammary gland, salivary gland and thyroid gland.

The protein resides in the secreted. Serine protease inhibitor which displays weak inhibitory activity against trypsin. May play a role in facial patterning during embryonic development. The chain is Peptidase inhibitor 15 (Pi15) from Mus musculus (Mouse).